Reading from the N-terminus, the 63-residue chain is Large ribosomal subunit protein eL37 (63 aa).

Zn(2+)-binding residues include C20, C23, C35, and C38. A C4-type zinc finger spans residues C20–C38.

It belongs to the eukaryotic ribosomal protein eL37 family. Zn(2+) is required as a cofactor.

In terms of biological role, binds to the 23S rRNA. The sequence is that of Large ribosomal subunit protein eL37 from Ignicoccus hospitalis (strain KIN4/I / DSM 18386 / JCM 14125).